Consider the following 602-residue polypeptide: Isocitrate dehydrogenase kinase/phosphatase (602 aa).

ATP-binding positions include 325-331 and K346; that span reads APGIKGM. Residue D381 is part of the active site.

The protein belongs to the AceK family.

Its subcellular location is the cytoplasm. It catalyses the reaction L-seryl-[isocitrate dehydrogenase] + ATP = O-phospho-L-seryl-[isocitrate dehydrogenase] + ADP + H(+). Functionally, bifunctional enzyme which can phosphorylate or dephosphorylate isocitrate dehydrogenase (IDH) on a specific serine residue. This is a regulatory mechanism which enables bacteria to bypass the Krebs cycle via the glyoxylate shunt in response to the source of carbon. When bacteria are grown on glucose, IDH is fully active and unphosphorylated, but when grown on acetate or ethanol, the activity of IDH declines drastically concomitant with its phosphorylation. This chain is Isocitrate dehydrogenase kinase/phosphatase, found in Paracidovorax citrulli (strain AAC00-1) (Acidovorax citrulli).